A 348-amino-acid polypeptide reads, in one-letter code: Erlin-1 (348 aa).

Residues 1 to 7 lie on the Cytoplasmic side of the membrane; sequence MNMTQAR. A helical membrane pass occupies residues 8–28; the sequence is LLVAAVVGLVAILLYASIHKI. The Lumenal segment spans residues 29–348; that stretch reads EEGHLAVYYR…SPIQNKENAG (320 aa). N108 carries an N-linked (GlcNAc...) asparagine glycan. At K269 the chain carries N6-acetyllysine. Over residues 318–336 the composition is skewed to basic and acidic residues; it reads DGRTGREDSLPPEEAREPS. Residues 318–348 form a disordered region; the sequence is DGRTGREDSLPPEEAREPSGESPIQNKENAG. Polar residues predominate over residues 339–348; sequence SPIQNKENAG.

It belongs to the band 7/mec-2 family. In terms of assembly, forms a heteromeric complex with ERLIN2. In complex with ERLIN2, interacts with RNF170. Interacts with AMFR and SYVN1. In terms of processing, deubiquitinated by USP25; leading to stabilization.

It localises to the endoplasmic reticulum membrane. Component of the ERLIN1/ERLIN2 complex which mediates the endoplasmic reticulum-associated degradation (ERAD) of inositol 1,4,5-trisphosphate receptors (IP3Rs). Involved in regulation of cellular cholesterol homeostasis by regulation the SREBP signaling pathway. Binds cholesterol and may promote ER retention of the SCAP-SREBF complex. This is Erlin-1 from Mus musculus (Mouse).